The primary structure comprises 109 residues: Large ribosomal subunit protein uL22 (109 aa).

It belongs to the universal ribosomal protein uL22 family. In terms of assembly, part of the 50S ribosomal subunit.

This protein binds specifically to 23S rRNA; its binding is stimulated by other ribosomal proteins, e.g. L4, L17, and L20. It is important during the early stages of 50S assembly. It makes multiple contacts with different domains of the 23S rRNA in the assembled 50S subunit and ribosome. Its function is as follows. The globular domain of the protein is located near the polypeptide exit tunnel on the outside of the subunit, while an extended beta-hairpin is found that lines the wall of the exit tunnel in the center of the 70S ribosome. In Ralstonia pickettii (strain 12J), this protein is Large ribosomal subunit protein uL22.